We begin with the raw amino-acid sequence, 213 residues long: ATP phosphoribosyltransferase (213 aa).

The protein belongs to the ATP phosphoribosyltransferase family. Short subfamily. As to quaternary structure, heteromultimer composed of HisG and HisZ subunits.

The protein localises to the cytoplasm. It carries out the reaction 1-(5-phospho-beta-D-ribosyl)-ATP + diphosphate = 5-phospho-alpha-D-ribose 1-diphosphate + ATP. The protein operates within amino-acid biosynthesis; L-histidine biosynthesis; L-histidine from 5-phospho-alpha-D-ribose 1-diphosphate: step 1/9. Functionally, catalyzes the condensation of ATP and 5-phosphoribose 1-diphosphate to form N'-(5'-phosphoribosyl)-ATP (PR-ATP). Has a crucial role in the pathway because the rate of histidine biosynthesis seems to be controlled primarily by regulation of HisG enzymatic activity. The sequence is that of ATP phosphoribosyltransferase from Bacillus pumilus (strain SAFR-032).